A 284-amino-acid polypeptide reads, in one-letter code: Nucleotide-binding protein PP_0949 (284 aa).

ATP is bound at residue 8–15; sequence GRSGSGKS. 60-63 lines the GTP pocket; the sequence is DARN.

This sequence belongs to the RapZ-like family.

In terms of biological role, displays ATPase and GTPase activities. The chain is Nucleotide-binding protein PP_0949 from Pseudomonas putida (strain ATCC 47054 / DSM 6125 / CFBP 8728 / NCIMB 11950 / KT2440).